Here is an 88-residue protein sequence, read N- to C-terminus: Small ribosomal subunit protein uS15 (88 aa).

Belongs to the universal ribosomal protein uS15 family. As to quaternary structure, part of the 30S ribosomal subunit. Forms a bridge to the 50S subunit in the 70S ribosome, contacting the 23S rRNA.

One of the primary rRNA binding proteins, it binds directly to 16S rRNA where it helps nucleate assembly of the platform of the 30S subunit by binding and bridging several RNA helices of the 16S rRNA. Its function is as follows. Forms an intersubunit bridge (bridge B4) with the 23S rRNA of the 50S subunit in the ribosome. The protein is Small ribosomal subunit protein uS15 of Francisella tularensis subsp. tularensis (strain FSC 198).